Consider the following 121-residue polypeptide: Phosphoribosyl-AMP cyclohydrolase (121 aa).

Asp-74 contributes to the Mg(2+) binding site. Cys-75 lines the Zn(2+) pocket. The Mg(2+) site is built by Asp-76 and Asp-78. Residues Cys-91 and Cys-98 each contribute to the Zn(2+) site.

It belongs to the PRA-CH family. Homodimer. The cofactor is Mg(2+). Zn(2+) serves as cofactor.

The protein localises to the cytoplasm. It catalyses the reaction 1-(5-phospho-beta-D-ribosyl)-5'-AMP + H2O = 1-(5-phospho-beta-D-ribosyl)-5-[(5-phospho-beta-D-ribosylamino)methylideneamino]imidazole-4-carboxamide. It functions in the pathway amino-acid biosynthesis; L-histidine biosynthesis; L-histidine from 5-phospho-alpha-D-ribose 1-diphosphate: step 3/9. Catalyzes the hydrolysis of the adenine ring of phosphoribosyl-AMP. The polypeptide is Phosphoribosyl-AMP cyclohydrolase (Methanothrix thermoacetophila (strain DSM 6194 / JCM 14653 / NBRC 101360 / PT) (Methanosaeta thermophila)).